The primary structure comprises 87 residues: Small ribosomal subunit protein uS15 (87 aa).

Belongs to the universal ribosomal protein uS15 family. As to quaternary structure, part of the 30S ribosomal subunit. Forms a bridge to the 50S subunit in the 70S ribosome, contacting the 23S rRNA.

Functionally, one of the primary rRNA binding proteins, it binds directly to 16S rRNA where it helps nucleate assembly of the platform of the 30S subunit by binding and bridging several RNA helices of the 16S rRNA. Its function is as follows. Forms an intersubunit bridge (bridge B4) with the 23S rRNA of the 50S subunit in the ribosome. The protein is Small ribosomal subunit protein uS15 of Dehalococcoides mccartyi (strain ATCC BAA-2266 / KCTC 15142 / 195) (Dehalococcoides ethenogenes (strain 195)).